The following is a 687-amino-acid chain: MSDPSTYRPAPGTIPTEPGVYKFRDPEGRVIYVGKAINLRSRLSNYFQDLSVLHPRTRQMVTTATSVEWTVVASEVEALQLEYTWIKKFDPHFNVKYRDDKTYPVLAVSVGERFPRAYFYRGPQRKGVRYYGPYSHAWAVRETLDLLTRVFPIRTCTKAVFNRHESLGRPCLLGYIDKCSAPCIGRVSESEHRIIVDGFCSFMAGNTDSVVRRLTNEMISASEALDFEKAARKRDDLNAVRKITEQQAVVLGDGTDADVIAVAADDLEASIQLFHVRSGKIRGQRGWIVERTDNSESELEELLQSFLIRFYSDEVAHEDQVSDKELTVARRGVDKQSHESDLANRRINTSVVPKEVLVHKAPANVEQTTAVLRSLRHSNVDVRVPQRGDKRALADTVFANAQEALRQHKIKRVSDLTTRSAALQEIHEALGLDEPPLRIECTDISHIQGTDVVASLVVFEDGLPKKSDYRRYKIKEAAGEGKSNDVGSIAEVVRRRFARYKNDCRMVPQEDEFDGSRFEDESLAGENTVAAKQRFAYSPQLFIVDGGAPQVAAAQDVLDELGITDVALIGIAKRLEEIWLPGEEDPLILPRNSQGLYLIQQLRDEAHRFAITFHRQQRSQRMRRSILDDIKGLGPARRKVLVAHFGSVKELKKASESEIMMVNGIGPALAHSIYVALHPDSDDSSVQ.

A GIY-YIG domain is found at 16–95 (TEPGVYKFRD…IKKFDPHFNV (80 aa)). One can recognise a UVR domain in the interval 208 to 243 (DSVVRRLTNEMISASEALDFEKAARKRDDLNAVRKI).

Belongs to the UvrC family. As to quaternary structure, interacts with UvrB in an incision complex.

The protein localises to the cytoplasm. Its function is as follows. The UvrABC repair system catalyzes the recognition and processing of DNA lesions. UvrC both incises the 5' and 3' sides of the lesion. The N-terminal half is responsible for the 3' incision and the C-terminal half is responsible for the 5' incision. The sequence is that of UvrABC system protein C from Corynebacterium diphtheriae (strain ATCC 700971 / NCTC 13129 / Biotype gravis).